A 480-amino-acid chain; its full sequence is MNFETVIGLEVHVELNTNSKIFSPTSAHFGNDQNANTNVIDWSFPGVLPVLNKGVVDAGIKAALALNMDIHKKMHFDRKNYFYPDNPKAYQISQFDEPIGYNGWIEVELEDGTTKKIGIERAHLEEDAGKNTHGTDGYSYVDLNRQGVPLIEIVSEADMRSPEEAYAYLTALKEVIQYAGISDVKMEEGSMRVDANISLRPYGQEKFGTKTELKNLNSFSNVRKGLEYEVQRQAEILRSGGQIRQETRRYDEANKATILMRVKEGAADYRYFPEPDLPLFEISDEWIEEMRTELPEFPKERRARYVSDLGLSDYDASQLTANKVTSDFFEKAVALGGDAKQVSNWLQGEVAQFLNAEGKTLEQIELTPENLVEMITIIEDGTISSKIAKKVFVHLAKNGGGAREYVEKAGMVQISDPAILIPIIHQVFADNEAAVADFKSGKRNADKAFTGFLMKATKGQANPQVALKLLAQELAKLKEN.

Belongs to the GatB/GatE family. GatB subfamily. In terms of assembly, heterotrimer of A, B and C subunits.

The enzyme catalyses L-glutamyl-tRNA(Gln) + L-glutamine + ATP + H2O = L-glutaminyl-tRNA(Gln) + L-glutamate + ADP + phosphate + H(+). It catalyses the reaction L-aspartyl-tRNA(Asn) + L-glutamine + ATP + H2O = L-asparaginyl-tRNA(Asn) + L-glutamate + ADP + phosphate + 2 H(+). Allows the formation of correctly charged Asn-tRNA(Asn) or Gln-tRNA(Gln) through the transamidation of misacylated Asp-tRNA(Asn) or Glu-tRNA(Gln) in organisms which lack either or both of asparaginyl-tRNA or glutaminyl-tRNA synthetases. The reaction takes place in the presence of glutamine and ATP through an activated phospho-Asp-tRNA(Asn) or phospho-Glu-tRNA(Gln). This Streptococcus pneumoniae (strain Hungary19A-6) protein is Aspartyl/glutamyl-tRNA(Asn/Gln) amidotransferase subunit B.